Consider the following 320-residue polypeptide: Pyrroline-5-carboxylate reductase 2 (320 aa).

An N-acetylserine modification is found at Ser-2. Residues 6–11 and Ser-34 each bind NADP(+); that span reads IGAGQL. Positions 8, 10, 11, 34, 36, 56, 70, 71, and 97 each coordinate NADPH. Residues Asn-56, 69–72, and 95–97 contribute to the NADP(+) site; these read AVKP and CAA. Residue Glu-164 participates in L-proline binding. Asn-230 is an NADPH binding site. L-proline-binding residues include Ala-237 and Thr-238. Residues 298-320 form a disordered region; it reads TTLTPTSSGKLLTRSPVPGGKKD. Ser-304 is modified (phosphoserine).

This sequence belongs to the pyrroline-5-carboxylate reductase family. In terms of assembly, homodecamer; composed of 5 homodimers. Interacts with LTO1.

It localises to the cytoplasm. The protein resides in the mitochondrion. The enzyme catalyses L-proline + NADP(+) = (S)-1-pyrroline-5-carboxylate + NADPH + 2 H(+). It catalyses the reaction L-proline + NAD(+) = (S)-1-pyrroline-5-carboxylate + NADH + 2 H(+). Its pathway is amino-acid biosynthesis; L-proline biosynthesis; L-proline from L-glutamate 5-semialdehyde: step 1/1. Oxidoreductase that catalyzes the last step in proline biosynthesis, which corresponds to the reduction of pyrroline-5-carboxylate to L-proline using NAD(P)H. At physiologic concentrations, has higher specific activity in the presence of NADH. Involved in cellular response to oxidative stress. In some cell types, such as erythrocytes, its primary function may be the generation of NADP(+). This is Pyrroline-5-carboxylate reductase 2 (PYCR2) from Bos taurus (Bovine).